Reading from the N-terminus, the 275-residue chain is MSSYSSNIDRLQREIARLKADDSREMSKEKQAQSKAHKAQQAISSAKSLSTQKSKMSELERATRDGAAIGKKRADIAKKIADKAKQLSSYQAKQFKADEQAVKKVAQEQKRLSDERTKHEAFIKQSLSSMRTTASATMEAEEEYDFFISHASEDKEAFVQDLVAALRDLGAKIFYDAYTLKVGDSLRRKIDQGLANSKFGIVVLSEHFFSKQWPARELDGLTAMEIGGQTRILPIWHKVSYDEVRRFSPSLADKVALNTSLKSVEEIAKELHSLI.

Basic and acidic residues predominate over residues 17–32 (RLKADDSREMSKEKQA). The tract at residues 17-66 (RLKADDSREMSKEKQAQSKAHKAQQAISSAKSLSTQKSKMSELERATRDG) is disordered. Residues 39 to 48 (AQQAISSAKS) show a composition bias toward low complexity. Residues 55 to 64 (KMSELERATR) show a composition bias toward basic and acidic residues. The TIR domain occupies 142–275 (EEYDFFISHA…EIAKELHSLI (134 aa)). NAD(+)-binding positions include 151–152 (AS) and Lys181. Glu217 is a catalytic residue.

In terms of assembly, homodimer. Interacts with host TIRAP, and probably host MYD88. Interacts with host TLR4, abolishes the interaction of host TIRAP with TLR4.

It is found in the secreted. Its subcellular location is the host cell membrane. The catalysed reaction is NAD(+) + H2O = ADP-D-ribose + nicotinamide + H(+). The enzyme catalyses NAD(+) = 2'cADPR + nicotinamide + H(+). In terms of biological role, virulence factor that interferes with host Toll-like receptor 2 (TLR2) and TLR4 signaling, resulting in the reduction of dendritic cell maturation, inhibition of pro-inflammatory cytokine secretion and impaired NF-kappa-B activation in macrophages. Binds host lipids. Has NAD(+) hydrolase (NADase) activity, catalyzes cleavage of NAD(+) into ADP-D-ribose (ADPR) and nicotinamide, also generates a cyclization variant of cyclic ADPR (cADPR), termed v-cADPR (probably 2'cADPR). This is Probable 2' cyclic ADP-D-ribose synthase TcpB (tcpB) from Brucella melitensis biotype 2 (strain ATCC 23457).